The primary structure comprises 151 residues: Large ribosomal subunit protein bL9 (151 aa).

The protein belongs to the bacterial ribosomal protein bL9 family.

In terms of biological role, binds to the 23S rRNA. In Rhodococcus jostii (strain RHA1), this protein is Large ribosomal subunit protein bL9.